The following is a 103-amino-acid chain: UPF0145 protein BCE33L0904 (103 aa).

It belongs to the UPF0145 family.

The polypeptide is UPF0145 protein BCE33L0904 (Bacillus cereus (strain ZK / E33L)).